Here is a 513-residue protein sequence, read N- to C-terminus: ATP synthase subunit alpha, mitochondrial (513 aa).

An ATP-binding site is contributed by 170-177 (GDRQTGKT).

This sequence belongs to the ATPase alpha/beta chains family. F-type ATPases have 2 components, CF(1) - the catalytic core - and CF(0) - the membrane proton channel. CF(1) has five subunits: alpha(3), beta(3), gamma(1), delta(1), epsilon(1). CF(0) has three main subunits: a, b and c.

The protein localises to the mitochondrion. The protein resides in the mitochondrion inner membrane. Functionally, mitochondrial membrane ATP synthase (F(1)F(0) ATP synthase or Complex V) produces ATP from ADP in the presence of a proton gradient across the membrane which is generated by electron transport complexes of the respiratory chain. F-type ATPases consist of two structural domains, F(1) - containing the extramembraneous catalytic core, and F(0) - containing the membrane proton channel, linked together by a central stalk and a peripheral stalk. During catalysis, ATP synthesis in the catalytic domain of F(1) is coupled via a rotary mechanism of the central stalk subunits to proton translocation. Subunits alpha and beta form the catalytic core in F(1). Rotation of the central stalk against the surrounding alpha(3)beta(3) subunits leads to hydrolysis of ATP in three separate catalytic sites on the beta subunits. Subunit alpha does not bear the catalytic high-affinity ATP-binding sites. The chain is ATP synthase subunit alpha, mitochondrial (ATPA) from Marchantia polymorpha (Common liverwort).